A 321-amino-acid chain; its full sequence is Protein ZAR1-like (321 aa).

A disordered region spans residues 110 to 214; it reads RTLSSCSPWD…GDAASEPLRR (105 aa). Residues 145–154 show a composition bias toward basic and acidic residues; the sequence is LRRDGDEAES. A 3CxxC-type zinc finger spans residues 222–307; sequence PKYGYFHCKD…QELCGRCKDK (86 aa).

Belongs to the ZAR1 family. In terms of assembly, interacts with YBX2.

The protein resides in the cytoplasm. Its subcellular location is the cytoplasmic ribonucleoprotein granule. In terms of biological role, mRNA-binding protein required for maternal mRNA storage, translation and degradation during oocyte maturation. Probably promotes formation of some phase-separated membraneless compartment that stores maternal mRNAs in oocytes: acts by undergoing liquid-liquid phase separation upon binding to maternal mRNAs. Binds to the 3'-UTR of maternal mRNAs, inhibiting their translation. In Homo sapiens (Human), this protein is Protein ZAR1-like.